Consider the following 181-residue polypeptide: Adenylate kinase (181 aa).

10–15 (GAGKGT) contributes to the ATP binding site. The segment at 30 to 59 (STGDLFRANIGQATALGVEAKKYIDAGELV) is NMP. Residues T31, R36, 57–59 (ELV), 85–88 (GFPR), and Q92 contribute to the AMP site. The segment at 126 to 132 (ARGRADD) is LID. R127 serves as a coordination point for ATP. 2 residues coordinate AMP: R129 and R140. An ATP-binding site is contributed by G166.

It belongs to the adenylate kinase family. Monomer.

The protein resides in the cytoplasm. The enzyme catalyses AMP + ATP = 2 ADP. The protein operates within purine metabolism; AMP biosynthesis via salvage pathway; AMP from ADP: step 1/1. Functionally, catalyzes the reversible transfer of the terminal phosphate group between ATP and AMP. Plays an important role in cellular energy homeostasis and in adenine nucleotide metabolism. The protein is Adenylate kinase of Rhodococcus erythropolis (strain PR4 / NBRC 100887).